The following is an 884-amino-acid chain: Blastomere cadherin (884 aa).

Residues 1–26 (MGGTDKFRYPSVWLCGLLCLLQVVPS) form the signal peptide. Positions 27 to 157 (INVDVSGCQP…KHTGLKRKKR (131 aa)) are excised as a propeptide. 5 Cadherin domains span residues 158–265 (DWVI…RPKF), 266–378 (TQPV…APIF), 379–489 (DPKT…APVF), 490–595 (VPVV…DNGP), and 596–706 (VPSP…GFDL). Topologically, residues 158–706 (DWVIPPIKVS…QEKLVAGFDL (549 aa)) are extracellular. Asparagine 427, asparagine 560, and asparagine 683 each carry an N-linked (GlcNAc...) asparagine glycan. The helical transmembrane segment at 707–730 (PIILVILGSILALLILSLLLLLFL) threads the bilayer. Residues 731 to 884 (KRKKVVKEPL…YGGDDDDDEE (154 aa)) lie on the Cytoplasmic side of the membrane.

As to expression, expressed in pituitary gland, lung and kidney.

The protein resides in the cell membrane. Its function is as follows. Cadherins are calcium-dependent cell adhesion proteins. They preferentially interact with themselves in a homophilic manner in connecting cells; cadherins may thus contribute to the sorting of heterogeneous cell types. This Xenopus laevis (African clawed frog) protein is Blastomere cadherin.